The primary structure comprises 175 residues: Bcl-2-related protein A1 (175 aa).

The BH1 signature appears at 77–97; that stretch reads KEFEDGIINWGRIVTIFAFEG. Positions 132 to 147 match the BH2 motif; sequence EWIRQNGGWENGFVKK.

This sequence belongs to the Bcl-2 family. Interacts directly with BAK1, BID, BMF and BBC3. Interacts directly with BCL2L11/BIM. Interacts with BAX isoform Sigma. Interacts directly with PMAIP1. Interacts with RTL10/BOP. Interacts with ING4. Interacts with UBQLN4. In terms of tissue distribution, seems to be restricted to the hematopoietic compartment. Expressed in peripheral blood, spleen, and bone marrow, at moderate levels in lung, small intestine and testis, at a minimal levels in other tissues. Also found in vascular smooth muscle cells and hematopoietic malignancies.

The protein localises to the cytoplasm. Retards apoptosis induced by IL-3 deprivation. May function in the response of hemopoietic cells to external signals and in maintaining endothelial survival during infection. Can inhibit apoptosis induced by serum starvation in the mammary epithelial cell line HC11. The polypeptide is Bcl-2-related protein A1 (BCL2A1) (Homo sapiens (Human)).